A 408-amino-acid chain; its full sequence is Protein EcsB (408 aa).

Transmembrane regions (helical) follow at residues 30-50 (HLVI…SKWI), 53-73 (IPAH…VLTS), 111-131 (LFPL…VTPG), 134-154 (LVSY…NQVM), 180-200 (LVLY…YVIM), 284-304 (YLGI…YVSA), 308-328 (IAAV…LPLF), 351-371 (YFSL…VASA), and 374-394 (AGLT…FVVL).

It is found in the cell membrane. In terms of biological role, presumed to form part of an ABC-transporter, it may form a transport channel. The chain is Protein EcsB (ecsB) from Bacillus subtilis (strain 168).